The sequence spans 304 residues: Ribosomal RNA small subunit methyltransferase H (304 aa).

S-adenosyl-L-methionine is bound by residues 36–38 (CGH), aspartate 55, phenylalanine 81, aspartate 102, and glutamine 109.

It belongs to the methyltransferase superfamily. RsmH family.

It localises to the cytoplasm. The catalysed reaction is cytidine(1402) in 16S rRNA + S-adenosyl-L-methionine = N(4)-methylcytidine(1402) in 16S rRNA + S-adenosyl-L-homocysteine + H(+). Specifically methylates the N4 position of cytidine in position 1402 (C1402) of 16S rRNA. This is Ribosomal RNA small subunit methyltransferase H from Onion yellows phytoplasma (strain OY-M).